An 838-amino-acid polypeptide reads, in one-letter code: Transient receptor potential cation channel subfamily V member 1 (838 aa).

2 disordered regions span residues Met1–Cys63 and Arg86–Pro109. The Cytoplasmic segment spans residues Met1–Arg432. The stretch at Arg110–Arg138 is one ANK 1 repeat. Residue Arg115 coordinates ATP. Residue Ser116 is modified to Phosphoserine; by PKA and PKD. Position 144 is a phosphothreonine; by PKA; in vitro (Thr144). One copy of the ANK 2 repeat lies at Thr153–Ser185. ATP-binding positions include Lys155, Lys160, Asn164, Tyr199–Gln202, and Glu210–Arg211. 4 ANK repeats span residues Thr203–Gln228, Glu249–Asp276, Asn285–Pro321, and Thr335–His358. Thr370 carries the post-translational modification Phosphothreonine; by PKA; in vitro. Residues Asn393–Val415 form an ANK 7 repeat. A helical transmembrane segment spans residues Ile433–Tyr453. Residues Tyr454 to Asp471 lie on the Extracellular side of the membrane. The helical transmembrane segment at Tyr472–Leu497 threads the bilayer. At Gln498–Ser510 the chain is on the cytoplasmic side. At Ser502 the chain carries Phosphoserine; by PKC/PRKCE. Tyr511 to Ser512 lines the resiniferatoxin pocket. The chain crosses the membrane as a helical span at residues Tyr511–Phe531. Residues Ser532–Lys535 lie on the Extracellular side of the membrane. The helical transmembrane segment at Glu536 to Thr556 threads the bilayer. Resiniferatoxin-binding residues include Thr550 and Arg557. Residues Arg557–Lys571 lie on the Cytoplasmic side of the membrane. The helical transmembrane segment at Met572–Ile599 threads the bilayer. Residues Glu600–Ser626 lie on the Extracellular side of the membrane. Asn604 carries an N-linked (GlcNAc...) asparagine glycan. An intramembrane region (pore-forming) is located at residues Tyr627–Phe649. Gly643 is a binding site for Na(+). The Selectivity filter signature appears at Gly643–Asp646. Asp646 serves as a coordination point for Ca(2+). Residues Thr650 to Ala657 are Extracellular-facing. Residues Val658–Val686 traverse the membrane as a helical segment. Positions Glu684–Phe712 are AD. Topologically, residues Asn687–Lys838 are cytoplasmic. The residue at position 704 (Thr704) is a Phosphothreonine. Residues Glu767–Thr801 form an interaction with calmodulin region. Ser774 is modified (phosphoserine; by PKA; in vitro). Residues Leu777–Leu792 form a required for PIP2-mediated channel inhibition region. A Phosphoserine; by PKC/PRKCE and PKC/PRKCZ modification is found at Ser800. Ser820 is modified (phosphoserine; by PKA; in vitro).

Belongs to the transient receptor (TC 1.A.4) family. TrpV subfamily. TRPV1 sub-subfamily. As to quaternary structure, homotetramer. Interacts with PIRT. May also form a heteromeric channel with TRPV3. Interacts with CALM, PRKCM and CSK. Interacts with PRKCG and NTRK1, probably by forming a trimeric complex. Interacts with the Scolopendra mutilans RhTx toxin. Interacts with the spider Tau-theraphotoxin-Hs1a. Interacts with TMEM100. Interacts with PACS2. Phosphorylation by PKA reverses capsaicin-induced dephosphorylation at multiple sites, probably including Ser-116 as a major phosphorylation site. Phosphorylation by CAMKII seems to regulate binding to vanilloids. Phosphorylated and modulated by PRKCE, PRKCM and probably PRKCZ. Dephosphorylation by calcineurin seems to lead to receptor desensitization and phosphorylation by CAMKII recovers activity. Predominantly expressed in trigeminal and dorsal root sensory ganglia. Expressed also in hippocampus, cortex, cerebellum, olfactory bulb, mesencephalon and hindbrain. High expression in the cell bodies and dendrites of neurons in the hippocampus and in the cortex. In the brain detected also in astrocytes and pericytes (at protein level). Isoform 1 and isoform 3 are expressed in brain and peripheral blood mononuclear cells.

It localises to the postsynaptic cell membrane. It is found in the cell projection. The protein localises to the dendritic spine membrane. Its subcellular location is the cell membrane. It carries out the reaction Ca(2+)(in) = Ca(2+)(out). It catalyses the reaction Mg(2+)(in) = Mg(2+)(out). The catalysed reaction is Na(+)(in) = Na(+)(out). The enzyme catalyses K(+)(in) = K(+)(out). Its activity is regulated as follows. Channel activity is activated via the interaction with PIRT and phosphatidylinositol 4,5-bisphosphate (PIP2). Both PIRT and PIP2 are required to activate channel activity. The channel is sensitized by ATP binding. Repeated stimulation with capsaicin gives rise to progressively smaller responses, due to desensitization. This desensitization is triggered by the influx of calcium ions and is inhibited by elevated ATP levels. Ca(2+) and CALM displace ATP from its binding site and trigger a conformation change that leads to a closed, desensitized channel. Intracellular PIP2 inhibits desensitization. The double-knot toxin (DkTx) from the Chinese earth tiger tarantula activates the channel and traps it in an open conformation. The Scolopendra mutilans RhTx toxin potentiates the heat activation pathway mediated by this channel by binding to the charge-rich outer pore region (in an activated state). In terms of biological role, non-selective calcium permeant cation channel involved in detection of noxious chemical and thermal stimuli. Seems to mediate proton influx and may be involved in intracellular acidosis in nociceptive neurons. Involved in mediation of inflammatory pain and hyperalgesia. Sensitized by a phosphatidylinositol second messenger system activated by receptor tyrosine kinases, which involves PKC isozymes and PCL. Activation by vanilloids, like capsaicin, and temperatures higher than 42 degrees Celsius. Upon activation, exhibits a time- and Ca(2+)-dependent outward rectification, followed by a long-lasting refractory state. Mild extracellular acidic pH (6.5) potentiates channel activation by noxious heat and vanilloids, whereas acidic conditions (pH &lt;6) directly activate the channel. Can be activated by endogenous compounds, including 12-hydroperoxytetraenoic acid and bradykinin. Acts as ionotropic endocannabinoid receptor with central neuromodulatory effects. Triggers a form of long-term depression (TRPV1-LTD) mediated by the endocannabinoid anandamine in the hippocampus and nucleus accumbens by affecting AMPA receptors endocytosis. Functionally, does not display channel activity in response to noxious chemical compounds, such as capsaicin and the vanilloid resiniferatoxin. Channel activity is not elicited by mildly acidic extracellular pH, and only slight channel activity is observed in response to noxiuos heat stimuli. The protein is Transient receptor potential cation channel subfamily V member 1 (Trpv1) of Rattus norvegicus (Rat).